Here is a 249-residue protein sequence, read N- to C-terminus: Phosphoribosylaminoimidazole-succinocarboxamide synthase (249 aa).

This sequence belongs to the SAICAR synthetase family.

It carries out the reaction 5-amino-1-(5-phospho-D-ribosyl)imidazole-4-carboxylate + L-aspartate + ATP = (2S)-2-[5-amino-1-(5-phospho-beta-D-ribosyl)imidazole-4-carboxamido]succinate + ADP + phosphate + 2 H(+). It functions in the pathway purine metabolism; IMP biosynthesis via de novo pathway; 5-amino-1-(5-phospho-D-ribosyl)imidazole-4-carboxamide from 5-amino-1-(5-phospho-D-ribosyl)imidazole-4-carboxylate: step 1/2. The sequence is that of Phosphoribosylaminoimidazole-succinocarboxamide synthase from Roseiflexus castenholzii (strain DSM 13941 / HLO8).